A 175-amino-acid polypeptide reads, in one-letter code: Thioredoxin M3, chloroplastic (175 aa).

A chloroplast-targeting transit peptide spans Met1–Ser59. One can recognise a Thioredoxin domain in the interval Ala61–Ser171. Residues Cys95 and Cys98 each act as nucleophile in the active site. Cys95 and Cys98 form a disulfide bridge.

Belongs to the thioredoxin family. Plant M-type subfamily.

The protein resides in the plastid. Its subcellular location is the chloroplast. Its function is as follows. Probable thiol-disulfide oxidoreductase that may be involved in the redox regulation of chloroplastic enzymes. The protein is Thioredoxin M3, chloroplastic of Oryza sativa subsp. japonica (Rice).